An 862-amino-acid polypeptide reads, in one-letter code: Protein SEY1 (862 aa).

Over 1–747 (MVSNGHFASA…KRSAIGGMTQ (747 aa)) the chain is Cytoplasmic. The GB1/RHD3-type G domain maps to 49 to 306 (GFNYHLISVF…IPADGFAVYA (258 aa)). 59 to 66 (GSQSTGKS) provides a ligand contact to GTP. Residues 481-507 (SNYTQELALYQKDLEKISAQLRKDEMR) adopt a coiled-coil conformation. A helical transmembrane segment spans residues 748–768 (IPVYFYILLLALGWNEIVAVL). The Lumenal portion of the chain corresponds to 769-771 (RNP). The chain crosses the membrane as a helical span at residues 772–792 (LYFFMLFLCAVGAFVTYQLNL). At 793–862 (WGPMIKMAEA…DDDDEDEGSW (70 aa)) the chain is on the cytoplasmic side. The tract at residues 819 to 862 (LEPSEAGPHAARYKNSTEEYEMSNVKAPQRTNSGDDDDEDEGSW) is disordered. Acidic residues predominate over residues 852–862 (GDDDDEDEGSW).

The protein belongs to the TRAFAC class dynamin-like GTPase superfamily. GB1/RHD3 GTPase family. RHD3 subfamily.

The protein localises to the endoplasmic reticulum membrane. In terms of biological role, cooperates with the reticulon proteins and tubule-shaping DP1 family proteins to generate and maintain the structure of the tubular endoplasmic reticulum network. Has GTPase activity, which is required for its function in ER organization. The sequence is that of Protein SEY1 from Uncinocarpus reesii (strain UAMH 1704).